The primary structure comprises 385 residues: MHAWEAPGSLSRALPLASSVLMLLLSCLWLLGAGPSLRLAPELLMEPWQVHRLLTHALGHTALPGLLLSLLLLPTLGWWQECHLGTVRFLHNSTVLALATGLLAVLLAGLGVSGAAGGCGYMPVHLAMLAGQSHHPGWPQRTLPPWLLPWLLLALTLLLSSEPPFLQLLCGLLTGLAYAAGAFQWLELSEQRLQVLQEGVLCKSLARCWPLRLFPTPGSLGELPVTYPAGVRPATPRPPYLASSDSWPHSDGSAQLPPRLGPGQLTWKNSERGLDWAGSSFASATTMWAALDEQMLQEGIQASLLDVSVQGSQSSLWLPKPSVSSLRLQQLQHMGFPTEQAAVALAATGRVEGAVSLLVEGLVDTEALVTEGRSSPAHCTGTGAS.

5 consecutive transmembrane segments (helical) span residues 13-33 (ALPL…LLGA), 58-78 (LGHT…TLGW), 95-115 (VLAL…VSGA), 146-166 (WLLP…PPFL), and 168-188 (LLCG…WLEL). Residues 238-264 (PPYLASSDSWPHSDGSAQLPPRLGPGQ) are disordered. In terms of domain architecture, UBA spans 322 to 361 (SVSSLRLQQLQHMGFPTEQAAVALAATGRVEGAVSLLVEG).

Its subcellular location is the membrane. This is Rhomboid domain-containing protein 3 (Rhbdd3) from Mus musculus (Mouse).